The primary structure comprises 880 residues: Alanine--tRNA ligase (880 aa).

H566, H570, C668, and H672 together coordinate Zn(2+).

This sequence belongs to the class-II aminoacyl-tRNA synthetase family. Zn(2+) serves as cofactor.

The protein localises to the cytoplasm. The catalysed reaction is tRNA(Ala) + L-alanine + ATP = L-alanyl-tRNA(Ala) + AMP + diphosphate. Its function is as follows. Catalyzes the attachment of alanine to tRNA(Ala) in a two-step reaction: alanine is first activated by ATP to form Ala-AMP and then transferred to the acceptor end of tRNA(Ala). Also edits incorrectly charged Ser-tRNA(Ala) and Gly-tRNA(Ala) via its editing domain. This Nostoc sp. (strain PCC 7120 / SAG 25.82 / UTEX 2576) protein is Alanine--tRNA ligase.